Consider the following 263-residue polypeptide: Acetylglutamate kinase (263 aa).

Substrate contacts are provided by residues 48-49 (GG), R70, and N162.

Belongs to the acetylglutamate kinase family. ArgB subfamily.

It localises to the cytoplasm. It carries out the reaction N-acetyl-L-glutamate + ATP = N-acetyl-L-glutamyl 5-phosphate + ADP. The protein operates within amino-acid biosynthesis; L-arginine biosynthesis; N(2)-acetyl-L-ornithine from L-glutamate: step 2/4. Functionally, catalyzes the ATP-dependent phosphorylation of N-acetyl-L-glutamate. The sequence is that of Acetylglutamate kinase from Shewanella sediminis (strain HAW-EB3).